The following is a 1343-amino-acid chain: DNA-directed RNA polymerase subunit beta (1343 aa).

It belongs to the RNA polymerase beta chain family. The RNAP catalytic core consists of 2 alpha, 1 beta, 1 beta' and 1 omega subunit. When a sigma factor is associated with the core the holoenzyme is formed, which can initiate transcription.

It carries out the reaction RNA(n) + a ribonucleoside 5'-triphosphate = RNA(n+1) + diphosphate. Functionally, DNA-dependent RNA polymerase catalyzes the transcription of DNA into RNA using the four ribonucleoside triphosphates as substrates. This chain is DNA-directed RNA polymerase subunit beta, found in Shewanella loihica (strain ATCC BAA-1088 / PV-4).